The chain runs to 288 residues: uncharacterized protein (288 aa).

This is an uncharacterized protein from Mycobacterium tuberculosis (strain CDC 1551 / Oshkosh).